The primary structure comprises 995 residues: Translation initiation factor IF-2 (995 aa).

The interval 53-399 is disordered; sequence NNAGSPAPAA…SGAPRGQGQV (347 aa). 2 stretches are compositionally biased toward pro residues: residues 60-87 and 104-119; these read PAAP…PPGG and TPGP…PPQS. Over residues 135–160 the composition is skewed to low complexity; it reads AAAEARAAALKAEQEAAVKAAQAARQ. A compositionally biased stretch (basic and acidic residues) spans 161–171; the sequence is QQRENVRREPP. A compositionally biased stretch (pro residues) spans 177–192; sequence RPGPRPGPGTMPPRPG. Residues 193 to 202 show a composition bias toward low complexity; that stretch reads SPAAGRSGAP. Composition is skewed to pro residues over residues 203–213 and 242–264; these read APGPGPRPGGR and RPSP…PSPA. The segment covering 273–363 has biased composition (gly residues); the sequence is RPGGPGSGRP…GAAGAFGRPG (91 aa). Positions 367–376 are enriched in basic residues; that stretch reads TRGRKSKKQR. The tr-type G domain occupies 486-658; that stretch reads SRPPVVTVMG…VLLTADASLE (173 aa). Residues 495–502 are G1; the sequence is GHVDHGKT. A GTP-binding site is contributed by 495–502; sequence GHVDHGKT. The segment at 520–524 is G2; the sequence is GITQH. Residues 545–548 form a G3 region; the sequence is DTPG. Residues 545–549 and 599–602 each bind GTP; these read DTPGH and NKID. Residues 599-602 are G4; the sequence is NKID. Residues 635–637 form a G5 region; that stretch reads AAK.

It belongs to the TRAFAC class translation factor GTPase superfamily. Classic translation factor GTPase family. IF-2 subfamily.

It localises to the cytoplasm. Its function is as follows. One of the essential components for the initiation of protein synthesis. Protects formylmethionyl-tRNA from spontaneous hydrolysis and promotes its binding to the 30S ribosomal subunits. Also involved in the hydrolysis of GTP during the formation of the 70S ribosomal complex. The protein is Translation initiation factor IF-2 of Salinispora arenicola (strain CNS-205).